A 337-amino-acid chain; its full sequence is Oxidoreductase andH (337 aa).

The protein belongs to the NmrA-type oxidoreductase family.

It functions in the pathway secondary metabolite biosynthesis; terpenoid biosynthesis. Oxidoreductase; part of the gene cluster that mediates the biosynthesis of anditomin, a fungal meroterpenoid. The first step of the pathway is the synthesis of 3,5-dimethylorsellinic acid (DMOA) by the polyketide synthase andM. DMOA is then converted to the phthalide compound 5,7-dihydroxy-4,6-dimethylphthalide (DHDMP) by the cytochrome P450 monooxygenase andK, which is further prenylated by the prenyltransferase andD to yield farnesyl-DHDMP. Further epoxidation by the FAD-dependent monooxygenase andE leads to epoxyfarnesyl-DHDMP. The next step involves the terpene cyclase andB that converts epoxyfarnesyl-DHDMP into preandiloid A through opening of the epoxide ring followed by the cyclization of the farnesyl moiety. Preandiloid A is in turn oxidized at the C-3 hydroxyl group to yield preandiloid B by the dehydrogenase andC. The dioxygenase andA is solely responsible for the dehydrogenation of preandiloid B leading to the enone preandiloid C, as well as for the intriguing structural rearrangement to generate the bicyclo[2.2.2]octane core, transforming preandiloid C into andiconin. FAD-binding monooxygenase andJ then produces andilesin D which is reduced by dehydrogenase andI to yield andilesin A. Action of acetyltransferase andG followed by a spontaneous acetate elimination leads then to andilesin B, which is in turn substrate of the short chain dehydrogenase andH to yield andilesin C. Finally, the dioxygenase andF catalyzes the transformation of andilesin C to anditomin. In Emericella variicolor (Aspergillus stellatus), this protein is Oxidoreductase andH.